Consider the following 102-residue polypeptide: Small ribosomal subunit protein bS6 (102 aa).

This sequence belongs to the bacterial ribosomal protein bS6 family.

Binds together with bS18 to 16S ribosomal RNA. This Solidesulfovibrio magneticus (strain ATCC 700980 / DSM 13731 / RS-1) (Desulfovibrio magneticus) protein is Small ribosomal subunit protein bS6.